The chain runs to 368 residues: tRNA/tmRNA (uracil-C(5))-methyltransferase (368 aa).

S-adenosyl-L-methionine contacts are provided by Gln-190, Tyr-218, Asn-223, Glu-239, and Asp-301. The active-site Nucleophile is Cys-326. Residue Glu-360 is the Proton acceptor of the active site.

Belongs to the class I-like SAM-binding methyltransferase superfamily. RNA M5U methyltransferase family. TrmA subfamily.

The catalysed reaction is uridine(54) in tRNA + S-adenosyl-L-methionine = 5-methyluridine(54) in tRNA + S-adenosyl-L-homocysteine + H(+). The enzyme catalyses uridine(341) in tmRNA + S-adenosyl-L-methionine = 5-methyluridine(341) in tmRNA + S-adenosyl-L-homocysteine + H(+). Functionally, dual-specificity methyltransferase that catalyzes the formation of 5-methyluridine at position 54 (m5U54) in all tRNAs, and that of position 341 (m5U341) in tmRNA (transfer-mRNA). The protein is tRNA/tmRNA (uracil-C(5))-methyltransferase of Photobacterium profundum (strain SS9).